The following is a 377-amino-acid chain: Tryptophan 2,3-dioxygenase (377 aa).

Substrate is bound by residues 57–61 (FIITH) and Arg-128. Position 313 (His-313) interacts with heme. Thr-328 is a substrate binding site.

Belongs to the tryptophan 2,3-dioxygenase family. Homotetramer. Dimer of dimers. It depends on heme as a cofactor.

It catalyses the reaction L-tryptophan + O2 = N-formyl-L-kynurenine. It functions in the pathway amino-acid degradation; L-tryptophan degradation via kynurenine pathway; L-kynurenine from L-tryptophan: step 1/2. It participates in pigment biosynthesis; ommochrome biosynthesis. Functionally, heme-dependent dioxygenase that catalyzes the oxidative cleavage of the L-tryptophan (L-Trp) pyrrole ring and converts L-tryptophan to N-formyl-L-kynurenine. Catalyzes the oxidative cleavage of the indole moiety. This Drosophila grimshawi (Hawaiian fruit fly) protein is Tryptophan 2,3-dioxygenase.